A 76-amino-acid polypeptide reads, in one-letter code: Toxin Acra III-2 (76 aa).

Positions 3-67 constitute an LCN-type CS-alpha/beta domain; sequence VPGNYPLNTY…IWDAVKNHCT (65 aa). 3 disulfides stabilise this stretch: C18-C41, C27-C46, and C31-C48.

The protein belongs to the long (3 C-C) scorpion toxin superfamily. Sodium channel inhibitor family. Beta subfamily. Expressed by the venom gland.

The protein resides in the secreted. In terms of biological role, binds to sodium channels (Nav) and affects the channel activation process. In Androctonus crassicauda (Arabian fat-tailed scorpion), this protein is Toxin Acra III-2.